We begin with the raw amino-acid sequence, 778 residues long: Protein SPT2 homolog (778 aa).

3 disordered regions span residues 1 to 21 (MDFH…GIAK), 50 to 625 (KKDE…AKPK), and 639 to 685 (VPKS…DDDD). An important for interaction with DNA region spans residues 1–665 (MDFHSVLKMA…PGHRPAMRPP (665 aa)). The stretch at 44–83 (VQAFLRKKDEESRRKETVEKRKKEDLLAKRKELKHDRKAR) forms a coiled coil. Residues 50 to 78 (KKDEESRRKETVEKRKKEDLLAKRKELKH) show a composition bias toward basic and acidic residues. Over residues 114–135 (EEDQNDNMAAEGEEYMTEEELY) the composition is skewed to acidic residues. A compositionally biased stretch (pro residues) spans 153–167 (QKVPKPAPGKKPPTP). A compositionally biased stretch (basic and acidic residues) spans 190–227 (RPVKKEERLRTAEELKELEFLERKAQKADRKDPKRNEQ). Positions 193–221 (KKEERLRTAEELKELEFLERKAQKADRKD) form a coiled coil. Polar residues predominate over residues 242 to 269 (LKGTHSGNSKSSSTEQNGTIRKSSSDTG). Positions 270–286 (SRTEKSGSVFHTKESKK) are enriched in basic and acidic residues. Residues 312-335 (SSQPSAASNSAFGRPSGSARPSGS) show a composition bias toward low complexity. 2 stretches are compositionally biased toward gly residues: residues 336 to 357 (SGPG…GGSA) and 365 to 384 (GGSG…GKPI). Low complexity predominate over residues 385–394 (GGLHSSHGSG). Residues 395–417 (KPTGGTGSGSGKPTGASGSGSGK) show a composition bias toward gly residues. Low complexity-rich tracts occupy residues 418-493 (PTGS…SGSA) and 506-559 (GSGS…PSSS). Residues 588 to 604 (VRPNSTSVPGSARSSLG) show a composition bias toward polar residues. A compositionally biased stretch (pro residues) spans 662–671 (MRPPGPPLPP). An important for interaction with histones region spans residues 666-778 (GPPLPPITSS…QLKAAKKMSR (113 aa)). The stretch at 735–778 (REQQKEEARSLRLGIQEDLEELQREEEELKRKAKQLKAAKKMSR) forms a coiled coil.

It belongs to the SPT2 family. Interacts with histones. Interacts with a heterotetrameric complex formed by histone H3 and H4, especially when the histone tetramer is not bound to DNA.

Its subcellular location is the nucleus. It localises to the nucleolus. In terms of biological role, histone chaperone that stabilizes pre-existing histone tetramers and regulates replication-independent histone exchange on chromatin. Required for normal chromatin refolding in the coding region of transcribed genes, and for the suppression of spurious transcription. Binds DNA and histones and promotes nucleosome assembly (in vitro). Facilitates formation of tetrameric histone complexes containing histone H3 and H4. Modulates RNA polymerase 1-mediated transcription. Binds DNA, with a preference for branched DNA species, such as Y-form DNA and Holliday junction DNA. The polypeptide is Protein SPT2 homolog (spty2d1) (Xenopus tropicalis (Western clawed frog)).